Here is a 359-residue protein sequence, read N- to C-terminus: 4-galactosyl-N-acetylglucosaminide 3-alpha-L-fucosyltransferase 9 (359 aa).

Topologically, residues 1-11 (MTSASKGILRP) are cytoplasmic. A helical; Signal-anchor for type II membrane protein membrane pass occupies residues 12 to 32 (FLIVCIILGCFMACLLIYIKP). The Lumenal portion of the chain corresponds to 33–359 (TNSWIFSPME…VGNLEKWFWN (327 aa)). Asn-62 carries N-linked (GlcNAc...) asparagine glycosylation. The interval 63-168 (ETTILIWVWP…RRDSDIQVPY (106 aa)) is acceptor-binding. Gln-75 is an a beta-D-galactosyl-(1-&gt;4)-N-acetyl-beta-D-glucosaminyl derivative binding site. 3 disulfides stabilise this stretch: Cys-82/Cys-335, Cys-91/Cys-338, and Cys-190/Cys-238. Asn-101 is a glycosylation site (N-linked (GlcNAc...) asparagine). Glu-137 provides a ligand contact to a beta-D-galactosyl-(1-&gt;4)-N-acetyl-beta-D-glucosaminyl derivative. Glu-137 acts as the Nucleophile in catalysis. Residue Glu-137 participates in GDP-beta-L-fucose binding. The N-linked (GlcNAc...) asparagine glycan is linked to Asn-153. Positions 168, 192, 194, 195, 202, 226, 241, 246, 252, 255, and 256 each coordinate GDP-beta-L-fucose. Residues 169-326 (GFLTVSTNPF…NWRKDFTVNL (158 aa)) are donor-binding. Residues 327–359 (PRFWESHACLACDHVKRHQEYKSVGNLEKWFWN) form an acceptor-binding region.

It belongs to the glycosyltransferase 10 family. In terms of assembly, homodimer. Post-translationally, N-glycosylated with complex-type N-glycans.

It localises to the golgi apparatus. Its subcellular location is the trans-Golgi network membrane. The protein resides in the golgi apparatus membrane. It carries out the reaction a beta-D-galactosyl-(1-&gt;4)-N-acetyl-beta-D-glucosaminyl derivative + GDP-beta-L-fucose = a beta-D-galactosyl-(1-&gt;4)-[alpha-L-fucosyl-(1-&gt;3)]-N-acetyl-beta-D-glucosaminyl derivative + GDP + H(+). It catalyses the reaction an alpha-Neu5Ac-(2-&gt;3)-beta-D-Gal-(1-&gt;4)-beta-D-GlcNAc-(1-&gt;3)-beta-D-Gal-(1-&gt;4)-beta-D-GlcNAc derivative + GDP-beta-L-fucose = an alpha-Neu5Ac-(2-&gt;3)-beta-D-Gal-(1-&gt;4)-beta-D-GlcNAc-(1-&gt;3)-beta-D-Gal-(1-&gt;4)-[alpha-L-Fuc-(1-&gt;3)]-beta-D-GlcNAc derivative + GDP + H(+). The enzyme catalyses alpha-N-glycoloylneuraminosyl-(2-&gt;3)-beta-D-galactosyl-(1-&gt;4)-N-acetyl-beta-D-glucosaminyl-(1-&gt;3)-beta-D-galactosyl-(1-&gt;4)-N-acetyl-beta-D-glucosaminyl-(1-&gt;3)-beta-D-galactosyl-(1-&gt;4)-beta-D-glucosyl-(1&lt;-&gt;1')-ceramide + GDP-beta-L-fucose = alpha-N-glycoloylneuraminosyl-(2-&gt;3)-beta-D-galactosyl-(1-&gt;4)-N-acetyl-beta-D-glucosaminyl-(1-&gt;3)-beta-D-galactosyl-(1-&gt;4)-[alpha-L-fucosyl-(1-&gt;3)]-N-acetyl-beta-D-glucosaminyl-(1-&gt;3)-beta-D-galactosyl-(1-&gt;4)-beta-D-glucosyl-(1&lt;-&gt;1')-ceramide + GDP + H(+). The catalysed reaction is alpha-D-galactosyl-(1-&gt;3)-beta-D-galactosyl-(1-&gt;4)-N-acetyl-beta-D-glucosaminyl-(1-&gt;3)-beta-D-galactosyl-(1-&gt;4)-beta-D-glucosyl-(1&lt;-&gt;1')-ceramide + GDP-beta-L-fucose = a neolactoside IV(3)-alpha-Gal,III(3)-alpha-Fuc-nLc4Cer + GDP + H(+). It carries out the reaction a neolactoside nLc4Cer + GDP-beta-L-fucose = a neolactoside III(3)-alpha-Fuc-nLc4Cer + GDP + H(+). It catalyses the reaction an N-acetyl-alpha-neuraminyl-(2-&gt;3)-beta-D-galactosyl-(1-&gt;4)-N-acetyl-beta-D-glucosaminyl derivative + GDP-beta-L-fucose = an alpha-Neu5Ac-(2-&gt;3)-beta-D-Gal-(1-&gt;4)-[alpha-L-Fuc-(1-&gt;3)]-beta-D-GlcNAc derivative + GDP + H(+). The enzyme catalyses beta-D-Gal-(1-&gt;4)-beta-D-GlcNAc-(1-&gt;3)-beta-D-Gal-(1-&gt;4)-D-Glc + GDP-beta-L-fucose = beta-D-Gal-(1-&gt;4)-[alpha-L-Fuc-(1-&gt;3)]-beta-D-GlcNAc-(1-&gt;3)-beta-D-Gal-(1-&gt;4)-D-Glc + GDP + H(+). The catalysed reaction is an alpha-L-Fuc-(1-&gt;2)-beta-D-Gal-(1-&gt;4)-beta-D-GlcNAc derivative + GDP-beta-L-fucose = an alpha-L-Fuc-(1-&gt;2)-beta-D-Gal-(1-&gt;4)-[alpha-L-Fuc-(1-&gt;3)]-beta-D-GlcNAc derivative + GDP + H(+). It functions in the pathway protein modification; protein glycosylation. Its pathway is glycolipid biosynthesis. Its activity is regulated as follows. Activated by Mn2+. Catalyzes alpha(1-&gt;3) linkage of fucosyl moiety transferred from GDP-beta-L-fucose to N-acetyl glucosamine (GlcNAc) within type 2 lactosamine (LacNAc, beta-D-Gal-(1-&gt;4)-beta-D-GlcNAc-) glycan attached to glycolipids and N- or O-linked glycoproteins. Fucosylates distal type 2 LacNAc and its fucosylated (H-type 2 LacNAc) and sialylated (sialyl-type 2 LacNAc) derivatives to form Lewis x (Lex) (CD15) and Lewis y (Ley) antigenic epitopes involved in cell adhesion and differentiation. Generates Lex epitopes in the brain, presumably playing a role in the maintenance of neuronal stemness and neurite outgrowth in progenitor neural cells. Fucosylates the internal type 2 LacNAc unit of the polylactosamine chain to form VIM-2 antigen that serves as recognition epitope for SELE. Can also modify milk oligosaccharides in particular type 2 tetrasaccharide LNnT. In Canis lupus familiaris (Dog), this protein is 4-galactosyl-N-acetylglucosaminide 3-alpha-L-fucosyltransferase 9.